The primary structure comprises 3010 residues: Genome polyprotein (3010 aa).

Position 2 is an N-acetylserine; by host (S2). Residues 2-23 (STNPKPQRKTKRNTNRRPQDVK) are interaction with STAT1. Positions 2–58 (STNPKPQRKTKRNTNRRPQDVKFPGGGQIVGGVYLLPRRGPRLGVRATRKTSERSQP) are interaction with EIF2AK2/PKR. The interval 2–59 (STNPKPQRKTKRNTNRRPQDVKFPGGGQIVGGVYLLPRRGPRLGVRATRKTSERSQPR) is interaction with DDX3X. Residues 2–75 (STNPKPQRKT…PKARQPEGRA (74 aa)) are disordered. Topologically, residues 2-168 (STNPKPQRKT…EDGVNYATGN (167 aa)) are cytoplasmic. 2 consecutive short sequence motifs (nuclear localization signal) follow at residues 5–13 (PKPQRKTKR) and 38–43 (PRRGPR). Positions 7 to 16 (PQRKTKRNTN) are enriched in basic residues. Residues 32–47 (GGVYLLPRRGPRLGVR) are compositionally biased toward low complexity. S53 carries the phosphoserine; by host modification. 2 consecutive short sequence motifs (nuclear localization signal) follow at residues 58–64 (PRGRRQP) and 66–71 (PKARQP). Position 99 is a phosphoserine; by host (S99). The important for endoplasmic reticulum and mitochondrial localization stretch occupies residues 112–152 (PRRRSRNLGKVIDTLTCGFADLMGYIPLVGAPLGGAARALA). Phosphoserine; by host PKA is present on S116. The interval 122-173 (VIDTLTCGFADLMGYIPLVGAPLGGAARALAHGVRVLEDGVNYATGNLPGCS) is interaction with APOA2. An important for lipid droplets localization region spans residues 164-167 (YATG). Residues 169-189 (LPGCSFSIFLLALLSCLTIPA) traverse the membrane as a helical segment. A propeptide spans 178–191 (LLALLSCLTIPASA) (ER anchor for the core protein, removed in mature form by host signal peptidase). Residues 190–358 (SAYEVRNVSG…AGAHWGVLAG (169 aa)) lie on the Lumenal side of the membrane. N-linked (GlcNAc...) asparagine; by host glycosylation is found at N196, N209, N234, and N250. Positions 265–296 (LVGAAALCSAMYVGDLCGSVFLVAQLFTFSPR) are important for fusion. N305 carries N-linked (GlcNAc...) asparagine; by host glycosylation. The helical transmembrane segment at 359-379 (LAYYSMVGNWAKVLIVMLLFA) threads the bilayer. Residues 380-725 (GVDGGTYVTG…WEYVLLLFLL (346 aa)) lie on the Lumenal side of the membrane. An HVR1 region spans residues 385 to 411 (TYVTGGTMAKNTLGITSLFSPGSSQKI). Residue N417 is glycosylated (N-linked (GlcNAc...) asparagine; by host). 3 N-linked (GlcNAc...) (high mannose) asparagine; by host glycosylation sites follow: N423, N430, and N448. Intrachain disulfides connect C429–C552, C452–C459, C486–C494, and C503–C508. Residues 474–482 (YNESHSSDQ) are HVR2. A CD81-binding 1 region spans residues 480–493 (SDQRPYCWHYAPRP). Residue N532 is glycosylated (N-linked (GlcNAc...) (high mannose) asparagine; by host). A CD81-binding 2 region spans residues 544–551 (PPQGNWFG). N556 is a glycosylation site (N-linked (GlcNAc...) (high mannose) asparagine; by host). An intrachain disulfide couples C564 to C569. The N-linked (GlcNAc...) (high mannose) asparagine; by host glycan is linked to N576. 3 disulfide bridges follow: C581/C585, C597/C620, and C607/C644. Residues N623 and N645 are each glycosylated (N-linked (GlcNAc...) (high mannose) asparagine; by host). C652 and C677 are oxidised to a cystine. An EIF2AK2/eIF2-alpha phosphorylation homology domain (PePHD) region spans residues 660-671 (SELSPLLLSTTE). Residues 726 to 746 (LADARVCACLWMMLLIAQAEA) form a helical membrane-spanning segment. Topologically, residues 747 to 757 (ALENLVVLNAA) are lumenal. The helical transmembrane segment at 758–778 (SVAGAHGILSFLVFFCAAWYI) threads the bilayer. Over 779-781 (KGR) the chain is Cytoplasmic. The chain crosses the membrane as a helical span at residues 782-803 (LVPGAAYALYGVWPLLLLLLAL). The Lumenal portion of the chain corresponds to 804–813 (PPRAYAMDRE). A helical transmembrane segment spans residues 814-834 (MAASCGGAVFVGLILLTLSPH). At 835 to 838 (YKLF) the chain is on the cytoplasmic side. Residues 839–859 (LARLIWWLQYFITRAEAHLQV) traverse the membrane as a helical segment. The Lumenal portion of the chain corresponds to 860-881 (WIPPLNVRGGRDAVILLTCAIH). Residues 882-902 (PELIFTITKILLAILGPLMVL) form a helical membrane-spanning segment. A Peptidase C18 domain is found at 903 to 1026 (QAGITKVPYF…SLEGQGWRLL (124 aa)). Residues 903-1657 (QAGITKVPYF…CMSADLEVVT (755 aa)) are Cytoplasmic-facing. The segment at 904–1206 (AGITKVPYFV…PVESMETTMR (303 aa)) is protease NS2-3. C922 carries the S-palmitoyl cysteine; by host lipid modification. The interval 929-949 (AGGHYVQMALMKLAALTGTYV) is interaction with host SCPS1. Active-site for protease NS2 activity; shared with dimeric partner residues include H952, E972, and C993. Residues 1027–1208 (APITAYSQQT…ESMETTMRSP (182 aa)) enclose the Peptidase S29 domain. Residues H1083 and D1107 each act as charge relay system; for serine protease NS3 activity in the active site. 2 residues coordinate Zn(2+): C1123 and C1125. S1165 (charge relay system; for serine protease NS3 activity) is an active-site residue. Zn(2+) is bound by residues C1171 and H1175. The region spanning 1217-1369 (PAVPQTFQVA…PNIEEVALSS (153 aa)) is the Helicase ATP-binding domain. 1230 to 1237 (APTGSGKS) contacts ATP. Mg(2+) is bound by residues S1237 and E1317. Residues 1316–1319 (DECH) carry the DECH box motif. The interval 1486 to 1497 (QRRGRTGRGRMG) is RNA-binding. Residues 1658–1678 (STWVLVGGVLAALAAYCLTTG) traverse the membrane as a helical segment. The tract at residues 1679–1690 (SVVIVGRIILSG) is NS3-binding. At 1679-1805 (SVVIVGRIIL…SITSPLTTQH (127 aa)) the chain is on the cytoplasmic side. The helical transmembrane segment at 1806-1826 (TLLFNILGGWVAAQLAPPSAA) threads the bilayer. Residues 1827-1828 (SA) lie on the Lumenal side of the membrane. Residues 1829–1849 (FVGAGIAGAAVGSIGLGKVLV) form a helical membrane-spanning segment. A glycine zipper region spans residues 1833–1861 (GIAGAAVGSIGLGKVLVDILAGYGAGVAG). Residue D1850 is a topological domain, cytoplasmic. A helical transmembrane segment spans residues 1851 to 1871 (ILAGYGAGVAGALVAFKVMSG). The Lumenal portion of the chain corresponds to 1872-1881 (EMPSTEDLVN). Residues 1882–1902 (LLPAILSPGALVVGVVCAAIL) form a helical membrane-spanning segment. At 1903–1972 (RRHVGPGEGA…WINEDCSTPC (70 aa)) the chain is on the cytoplasmic side. Residues C1968 and C1972 are each lipidated (S-palmitoyl cysteine; by host). The stretch at 1973–2003 (SGSWLRDVWDWICTVLTDFKTWLQSKLLPRL) is an intramembrane region. Residues 1978–1998 (RDVWDWICTVLTDFKTWLQSK) form a membrane-binding region. The Cytoplasmic segment spans residues 2004–2989 (PGVPFFSCQR…YHSLSRARPR (986 aa)). The RNA-binding stretch occupies residues 2005–2221 (GVPFFSCQRG…KATCTTRHDS (217 aa)). Zn(2+)-binding residues include C2011, C2029, C2031, and C2052. The interval 2120 to 2208 (EFFTEVDGVR…ASSSASQLSA (89 aa)) is FKBP8-binding. A transcriptional activation region spans residues 2120–2332 (EFFTEVDGVR…PIPPPRRKRT (213 aa)). Residues 2135-2139 (PACKP) form an interaction with non-structural protein 4A region. The segment at 2187-2219 (KRRLARGSPPSLASSSASQLSAPSLKATCTTRH) is disordered. An interaction with host SKP2 region spans residues 2189–2441 (RLARGSPPSL…PCAAEETKLP (253 aa)). Phosphoserine; by host; in p56 is present on S2194. Positions 2194–2211 (SPPSLASSSASQLSAPSL) are enriched in low complexity. The residue at position 2197 (S2197) is a Phosphoserine; by host; in p58. S2201 carries the phosphoserine; by host; in p56 and p58, regulates intracellular NS5A distribution modification. Phosphoserine; by host; in p58 occurs at positions 2204, 2207, and 2210. 2 ISDR regions span residues 2206-2245 (LSAP…TRVE) and 2210-2249 (SLKA…SENK). Residues 2210 to 2275 (SLKATCTTRH…REVSVPAEIL (66 aa)) are EIF2AK2/PKR-binding. Residues 2249-2306 (KVVILDSFEPLQAEEDEREVSVPAEILRRSRKFPRAMPIWARPDYNPPLLESWKDPDY) form an NS4B-binding region. The short motif at 2322–2325 (PPIP) is the SH3-binding element. A Nuclear localization signal motif is present at residues 2326–2334 (PPRRKRTVV). Residues 2332 to 2441 (TVVLSESTVS…PCAAEETKLP (110 aa)) form an interaction with host IFI27 region. K2350 is covalently cross-linked (Glycyl lysine isopeptide (Lys-Gly) (interchain with G-Cter in ubiquitin)). The span at 2351-2371 (TFGSSESSAVDSGTATASPDQ) shows a compositional bias: polar residues. Positions 2351-2407 (TFGSSESSAVDSGTATASPDQPSDDGDAGSDVESYSSMPPLEGEPGDPDLSDGSWST) are disordered. The V3 stretch occupies residues 2354 to 2377 (SSESSAVDSGTATASPDQPSDDGD). Phosphoserine; by host is present on residues S2448 and S2461. The RdRp catalytic domain maps to 2633-2751 (PMGFAYDTRC…ICESAGTQED (119 aa)). Residues D2639, D2737, and D2738 each coordinate Mg(2+). The helical transmembrane segment at 2990-3010 (WFMWCLLLLSVGVGIYLLPNR) threads the bilayer.

It belongs to the hepacivirus polyprotein family. In terms of assembly, homooligomer. Interacts with E1 (via C-terminus). Interacts with the non-structural protein 5A. Interacts (via N-terminus) with host STAT1 (via SH2 domain); this interaction results in decreased STAT1 phosphorylation and ubiquitin-mediated proteasome-dependent STAT1 degradation, leading to decreased IFN-stimulated gene transcription. Interacts with host STAT3; this interaction constitutively activates STAT3. Interacts with host LTBR receptor. Interacts with host TNFRSF1A receptor and possibly induces apoptosis. Interacts with host HNRPK. Interacts with host YWHAE. Interacts with host UBE3A/E6AP. Interacts with host DDX3X. Interacts with host APOA2. Interacts with host RXRA protein. Interacts with host SP110 isoform 3/Sp110b; this interaction sequesters the transcriptional corepressor SP110 away from the nucleus. Interacts with host CREB3 nuclear transcription protein; this interaction triggers cell transformation. Interacts with host ACY3. Interacts with host C1QR1. Interacts with host RBM24; this interaction, which enhances the interaction of the mature core protein with 5'-UTR, may inhibit viral translation and favor replication. Interacts with host EIF2AK2/PKR; this interaction induces the autophosphorylation of EIF2AK2. Part of the viral assembly initiation complex composed of NS2, E1, E2, NS3, NS4A, NS5A and the mature core protein. As to quaternary structure, forms a heterodimer with envelope glycoprotein E2. Interacts with mature core protein. Interacts with protease NS2. The heterodimer E1/E2 interacts with host CLDN1; this interaction plays a role in viral entry into host cell. Interacts with host SPSB2 (via C-terminus). Part of the viral assembly initiation complex composed of NS2, E1, E2, NS3, NS4A, NS5A and the mature core protein. Interacts with human PLSCR1. Interacts with host NEURL3; this interaction prevents E1 binding to glycoprotein E2. Forms a heterodimer with envelope glycoprotein E1. Interacts with host CD81 and SCARB1 receptors; these interactions play a role in viral entry into host cell. Interacts with host EIF2AK2/PKR; this interaction inhibits EIF2AK2 and probably allows the virus to evade the innate immune response. Interacts with host CD209/DC-SIGN and CLEC4M/DC-SIGNR. Interact with host SPCS1; this interaction is essential for viral particle assembly. Interacts with protease NS2. The heterodimer E1/E2 interacts with host CLDN1; this interaction plays a role in viral entry into host cell. Part of the viral assembly initiation complex composed of NS2, E1, E2, NS3, NS4A, NS5A and the mature core protein. Interacts with host SLC3A2/4F2hc; the interaction may facilitate viral entry into host cell. Interacts with human PLSCR1. In terms of assembly, homohexamer. Homoheptamer. Interacts with protease NS2. As to quaternary structure, homodimer. Interacts with host SPCS1; this interaction is essential for viral particle assembly. Interacts with envelope glycoprotein E1. Interacts with envelope glycoprotein E2. Interacts with viroporin p7. Interacts with serine protease/helicase NS3. Part of the replication complex composed of NS2, NS3, NS4A, NS4B, NS5A and the RNA-directed RNA polymerase embedded in an ER-derived membranous web. Part of the viral assembly initiation complex composed of NS2, E1, E2, NS3, NS4A, NS5A and the mature core protein. Interacts with protease NS2. Interacts with non-structural protein 4A; this interaction stabilizes the folding of NS3 serine protease. NS3-NS4A interaction is essential for NS3 activation and allows membrane anchorage of the latter. NS3/NS4A complex also prevents phosphorylation of host IRF3, thus preventing the establishment of dsRNA induced antiviral state. Interacts with host MAVS; this interaction leads to the cleavage and inhibition of host MAVS. Interacts with host TICAM1; this interaction leads to the cleavage and inhibition of host TICAM1. Interacts with host TANK-binding kinase/TBK1; this interaction results in the inhibition of the association between TBK1 and IRF3, which leads to the inhibition of IRF3 activation. Interacts with host RBM24. Part of the replication complex composed of NS2, NS3, NS4A, NS4B, NS5A and the RNA-directed RNA polymerase embedded in an ER-derived membranous web. Part of the viral assembly initiation complex composed of NS2, E1, E2, NS3, NS4A, NS5A and the mature core protein. In terms of assembly, monomer. Homodimer; dimerization is required for RNA-binding. Interacts with the mature core protein. Interacts with host GRB2. Interacts with host BIN1. Interacts with host PIK3R1. Interacts with host SRCAP. Interacts with host FKBP8. Interacts with host VAPB. Interacts with host EIF2AK2/PKR; this interaction leads to disruption of EIF2AK2 dimerization by NS5A and probably allows the virus to evade the innate immune response. Interacts (via N-terminus) with host PACSIN2 (via N-terminus); this interaction attenuates protein kinase C alpha-mediated phosphorylation of PACSIN2 by disrupting the interaction between PACSIN2 and PRKCA. Interacts (via N-terminus) with host SRC kinase (via SH2 domain). Interacts with most Src-family kinases. Interacts with host IFI27 and SKP2; promotes the ubiquitin-mediated proteasomal degradation of NS5A. Interacts (via N-terminus) with non-structural protein 4A. Interacts with non-structural protein 4B. Interacts with RNA-directed RNA polymerase. Part of the replication complex composed of NS2, NS3, NS4A, NS4B, NS5A and the RNA-directed RNA polymerase embedded in an ER-derived membranous web. Interacts with host GPS2. Interacts with host TNFRSF21; this interaction allows the modulation by the virus of JNK, p38 MAPK, STAT3, and Akt signaling pathways in a DR6-dependent manner. Interacts (via N-terminus) with host CIDEB (via N-terminus); this interaction seems to regulate the association of HCV particles with APOE. Interacts with host CHKA/Choline Kinase-alpha; CHKA bridges host PI4KA and NS5A and potentiates NS5A-stimulated PI4KA activity, which then facilitates the targeting of the ternary complex to the ER for viral replication. Interacts with host SPSB2 (via C-terminus); this interaction targets NS5A for ubiquitination and degradation. Part of the viral assembly initiation complex composed of NS2, E1, E2, NS3, NS4A, NS5A and the mature core protein. Requires Zn(2+) as cofactor. It depends on Mg(2+) as a cofactor. In terms of processing, specific enzymatic cleavages in vivo yield mature proteins. The structural proteins, core, E1, E2 and p7 are produced by proteolytic processing by host signal peptidases. The core protein precursor is synthesized as a 23 kDa, which is retained in the ER membrane through the hydrophobic signal peptide. Cleavage by the signal peptidase releases the 21 kDa mature core protein. The cleavage of the core protein precursor occurs between aminoacids 176 and 188 but the exact cleavage site is not known. Some degraded forms of the core protein appear as well during the course of infection. The other proteins (p7, NS2, NS3, NS4A, NS4B, NS5A and NS5B) are cleaved by the viral proteases. Autoprocessing between NS2 and NS3 is mediated by the NS2 cysteine protease catalytic domain and regulated by the NS3 N-terminal domain. Post-translationally, phosphorylated by host PKC and PKA. Ubiquitinated; mediated by UBE3A and leading to core protein subsequent proteasomal degradation. In terms of processing, highly N-glycosylated. Post-translationally, palmitoylation is required for NS2/3 autoprocessing and E2 recruitment to membranes. Palmitoylated. This modification may play a role in its polymerization or in protein-protein interactions. In terms of processing, cleaved by host caspases which are probably activated by the viral infection. Post-translationally, ubiquitinated. Ubiquitination, most probably at Lys-2350, mediated by host IFI27 and SKP2 leads to proteasomal degradation, restricting viral infection. Ubiquitination by host TRIM22 leads to interruption of viral replication. Phosphorylated on serines in a basal form termed p56. p58 is a hyperphosphorylated form of p56. p56 and p58 coexist in the cell in roughly equivalent amounts. Hyperphosphorylation is dependent on the presence of NS4A. Host CSNK1A1/CKI-alpha or RPS6KB1 kinases may be responsible for NS5A phosphorylation. In terms of processing, tyrosine phosphorylation is essential for the interaction with host SRC. Post-translationally, the N-terminus is phosphorylated by host PRK2/PKN2.

The protein localises to the host endoplasmic reticulum membrane. Its subcellular location is the host mitochondrion membrane. It is found in the virion. It localises to the host cytoplasm. The protein resides in the host nucleus. The protein localises to the host lipid droplet. Its subcellular location is the virion membrane. It is found in the host mitochondrion. It localises to the host cell membrane. The protein resides in the host perinuclear region. The catalysed reaction is Hydrolysis of four peptide bonds in the viral precursor polyprotein, commonly with Asp or Glu in the P6 position, Cys or Thr in P1 and Ser or Ala in P1'.. It catalyses the reaction a ribonucleoside 5'-triphosphate + H2O = a ribonucleoside 5'-diphosphate + phosphate + H(+). The enzyme catalyses ATP + H2O = ADP + phosphate + H(+). It carries out the reaction RNA(n) + a ribonucleoside 5'-triphosphate = RNA(n+1) + diphosphate. Its activity is regulated as follows. Inhibited by the antiviral drug hexamethylene amiloride. Inhibition by amantadine appears to be genotype-dependent. Also inhibited by long-alkyl-chain iminosugar derivatives. Activity is up-regulated by PRK2/PKN2-mediated phosphorylation. Its function is as follows. Packages viral RNA to form a viral nucleocapsid, and promotes virion budding. Participates in the viral particle production as a result of its interaction with the non-structural protein 5A. Binds RNA and may function as a RNA chaperone to induce the RNA structural rearrangements taking place during virus replication. Modulates viral translation initiation by interacting with viral IRES and 40S ribosomal subunit. Affects various cell signaling pathways, host immunity and lipid metabolism. Prevents the establishment of cellular antiviral state by blocking the interferon-alpha/beta (IFN-alpha/beta) and IFN-gamma signaling pathways and by blocking the formation of phosphorylated STAT1 and promoting ubiquitin-mediated proteasome-dependent degradation of STAT1. Activates STAT3 leading to cellular transformation. Regulates the activity of cellular genes, including c-myc and c-fos. May repress the promoter of p53, and sequester CREB3 and SP110 isoform 3/Sp110b in the cytoplasm. Represses cell cycle negative regulating factor CDKN1A, thereby interrupting an important check point of normal cell cycle regulation. Targets transcription factors involved in the regulation of inflammatory responses and in the immune response: suppresses NF-kappa-B activation, and activates AP-1. Binds to dendritic cells (DCs) via C1QR1, resulting in down-regulation of T-lymphocytes proliferation. Alters lipid metabolism by interacting with hepatocellular proteins involved in lipid accumulation and storage. Induces up-regulation of FAS promoter activity, and thereby contributes to the increased triglyceride accumulation in hepatocytes (steatosis). In terms of biological role, forms a heterodimer with envelope glycoprotein E2, which mediates virus attachment to the host cell, virion internalization through clathrin-dependent endocytosis and fusion with host membrane. Fusion with the host cell is most likely mediated by both E1 and E2, through conformational rearrangements of the heterodimer required for fusion rather than a classical class II fusion mechanism. E1/E2 heterodimer binds host apolipoproteins such as APOB and APOE thereby forming a lipo-viro-particle (LVP). APOE associated to the LVP allows the initial virus attachment to cell surface receptors such as the heparan sulfate proteoglycans (HSPGs), syndecan-1 (SDC1), syndecan-1 (SDC2), the low-density lipoprotein receptor (LDLR) and scavenger receptor class B type I (SCARB1). The cholesterol transfer activity of SCARB1 allows E2 exposure and binding of E2 to SCARB1 and the tetraspanin CD81. E1/E2 heterodimer binding on CD81 activates the epithelial growth factor receptor (EGFR) signaling pathway. Diffusion of the complex E1-E2-EGFR-SCARB1-CD81 to the cell lateral membrane allows further interaction with Claudin 1 (CLDN1) and occludin (OCLN) to finally trigger HCV entry. Functionally, forms a heterodimer with envelope glycoprotein E1, which mediates virus attachment to the host cell, virion internalization through clathrin-dependent endocytosis and fusion with host membrane. Fusion with the host cell is most likely mediated by both E1 and E2, through conformational rearrangements of the heterodimer required for fusion rather than a classical class II fusion mechanism. The interaction between envelope glycoprotein E2 and host apolipoprotein E/APOE allows the proper assembly, maturation and infectivity of the viral particles. This interaction is probably promoted via the up-regulation of cellular autophagy by the virus. E1/E2 heterodimer binds host apolipoproteins such as APOB and APOE thereby forming a lipo-viro-particle (LVP). APOE associated to the LVP allows the initial virus attachment to cell surface receptors such as the heparan sulfate proteoglycans (HSPGs), syndecan-1 (SDC1), syndecan-1 (SDC2), the low-density lipoprotein receptor (LDLR) and scavenger receptor class B type I (SCARB1). The cholesterol transfer activity of SCARB1 allows E2 exposure and binding of E2 to SCARB1 and the tetraspanin CD81. E1/E2 heterodimer binding on CD81 activates the epithelial growth factor receptor (EGFR) signaling pathway. Diffusion of the complex E1-E2-EGFR-SCARB1-CD81 to the cell lateral membrane allows further interaction with Claudin 1 (CLDN1) and occludin (OCLN) to finally trigger HCV entry. Inhibits host EIF2AK2/PKR activation, preventing the establishment of an antiviral state. Viral ligand for CD209/DC-SIGN and CLEC4M/DC-SIGNR, which are respectively found on dendritic cells (DCs), and on liver sinusoidal endothelial cells and macrophage-like cells of lymph node sinuses. These interactions allow the capture of circulating HCV particles by these cells and subsequent facilitated transmission to permissive cells such as hepatocytes and lymphocyte subpopulations. The interaction between E2 and host amino acid transporter complex formed by SLC3A2 and SLC7A5/LAT1 may facilitate viral entry into host cell. Ion channel protein that acts as a viroporin and plays an essential role in the assembly, envelopment and secretion of viral particles. Regulates the host cell secretory pathway, which induces the intracellular retention of viral glycoproteins and favors assembly of viral particles. Creates a pore in acidic organelles and releases Ca(2+) and H(+) in the cytoplasm of infected cells, leading to a productive viral infection. High levels of cytoplasmic Ca(2+) may trigger membrane trafficking and transport of viral ER-associated proteins to viroplasms, sites of viral genome replication. This ionic imbalance induces the assembly of the inflammasome complex, which triggers the maturation of pro-IL-1beta into IL-1beta through the action of caspase-1. Targets also host mitochondria and induces mitochondrial depolarization. In addition of its role as a viroporin, acts as a lipid raft adhesion factor. Its function is as follows. Cysteine protease required for the proteolytic auto-cleavage between the non-structural proteins NS2 and NS3. The N-terminus of NS3 is required for the function of NS2 protease (active region NS2-3). Promotes the initiation of viral particle assembly by mediating the interaction between structural and non-structural proteins. In terms of biological role, displays three enzymatic activities: serine protease with a chymotrypsin-like fold, NTPase and RNA helicase. NS3 serine protease, in association with NS4A, is responsible for the cleavages of NS3-NS4A, NS4A-NS4B, NS4B-NS5A and NS5A-NS5B. The NS3/NS4A complex prevents phosphorylation of host IRF3, thus preventing the establishment of dsRNA induced antiviral state. The NS3/NS4A complex induces host amino acid transporter component SLC3A2, thus contributing to HCV propagation. NS3 RNA helicase binds to RNA and unwinds both dsDNA and dsRNA in the 3' to 5' direction, and likely resolves RNA complicated stable secondary structures in the template strand. Binds a single ATP and catalyzes the unzipping of a single base pair of dsRNA. Inhibits host antiviral proteins TBK1 and IRF3 thereby preventing the establishment of an antiviral state. Cleaves host MAVS/CARDIF thereby preventing the establishment of an antiviral state. Cleaves host TICAM1/TRIF, thereby disrupting TLR3 signaling and preventing the establishment of an antiviral state. Functionally, peptide cofactor which forms a non-covalent complex with the N-terminal of NS3 serine protease. The NS3/NS4A complex prevents phosphorylation of host IRF3, thus preventing the establishment of dsRNA induced antiviral state. The NS3/NS4A complex induces host amino acid transporter component SLC3A2, thus contributing to HCV propagation. Induces a specific membrane alteration that serves as a scaffold for the virus replication complex. This membrane alteration gives rise to the so-called ER-derived membranous web that contains the replication complex. NS4B self-interaction contributes to its function in membranous web formation. Promotes host TRIF protein degradation in a CASP8-dependent manner thereby inhibiting host TLR3-mediated interferon signaling. Disrupts the interaction between STING and TBK1 contributing to the inhibition of interferon signaling. Its function is as follows. Phosphorylated protein that is indispensable for viral replication and assembly. Both hypo- and hyperphosphorylated states are required for the viral life cycle. The hyperphosphorylated form of NS5A is an inhibitor of viral replication. Involved in RNA-binding and especially in binding to the viral genome. Zinc is essential for RNA-binding. Participates in the viral particle production as a result of its interaction with the viral mature core protein. Its interaction with host VAPB may target the viral replication complex to vesicles. Down-regulates viral IRES translation initiation. Mediates interferon resistance, presumably by interacting with and inhibiting host EIF2AK2/PKR. Prevents BIN1-induced apoptosis. Acts as a transcriptional activator of some host genes important for viral replication when localized in the nucleus. Via the interaction with host PACSIN2, modulates lipid droplet formation in order to promote virion assembly. Modulates TNFRSF21/DR6 signaling pathway for viral propagation. In terms of biological role, RNA-dependent RNA polymerase that performs primer-template recognition and RNA synthesis during viral replication. Initiates RNA transcription/replication at a flavin adenine dinucleotide (FAD), resulting in a 5'- FAD cap on viral RNAs. In this way, recognition of viral 5' RNA by host pattern recognition receptors can be bypassed, thereby evading activation of antiviral pathways. This chain is Genome polyprotein, found in Hepatitis C virus genotype 1b (isolate Con1) (HCV).